Consider the following 506-residue polypeptide: AMP phosphorylase (506 aa).

Residues Gly-168, 194–199 (SRAITG), and Thr-203 contribute to the AMP site. Residue Asp-256 is the Proton donor of the active site. Residues Ser-264 and Lys-288 each contribute to the AMP site.

The protein belongs to the thymidine/pyrimidine-nucleoside phosphorylase family. Type 2 subfamily.

The catalysed reaction is AMP + phosphate = alpha-D-ribose 1,5-bisphosphate + adenine. It carries out the reaction CMP + phosphate = cytosine + alpha-D-ribose 1,5-bisphosphate. It catalyses the reaction UMP + phosphate = alpha-D-ribose 1,5-bisphosphate + uracil. Catalyzes the conversion of AMP and phosphate to adenine and ribose 1,5-bisphosphate (R15P). Exhibits phosphorylase activity toward CMP and UMP in addition to AMP. Functions in an archaeal AMP degradation pathway, together with R15P isomerase and RubisCO. The chain is AMP phosphorylase from Methanococcoides burtonii (strain DSM 6242 / NBRC 107633 / OCM 468 / ACE-M).